Consider the following 643-residue polypeptide: Ecto-NOX disulfide-thiol exchanger 1 (643 aa).

In terms of domain architecture, RRM spans 142 to 221 (KTVFVGGLPE…GRLHVDFAQA (80 aa)). Coiled-coil stretches lie at residues 307–342 (VQSA…LTGI) and 425–570 (QAYA…EALL).

This sequence belongs to the ENOX family. Cu cation is required as a cofactor. Expressed in lymphocyte cells, breast and breast cancer (at protein level). Found in the sera of cancer patients with a wide variety of cancers including breast, prostate, lung and ovarian cancers, leukemias, and lymphomas. Found also in the serum of healthy volunteers or patients with disorders other than cancer. Probably shed into serum by cancer cells.

The protein localises to the cell membrane. The protein resides in the secreted. Its subcellular location is the extracellular space. Its activity is regulated as follows. Not inhibited by the antitumor sulfonylurea LY181984, the vabilloid capsaicin, and retinoids. Functionally, probably acts as a terminal oxidase of plasma electron transport from cytosolic NAD(P)H via hydroquinones to acceptors at the cell surface. Hydroquinone oxidase activity alternates with a protein disulfide-thiol interchange/oxidoreductase activity which may control physical membrane displacements associated with vesicle budding or cell enlargement. The activities oscillate with a period length of 24 minutes and play a role in control of the ultradian cellular biological clock. The polypeptide is Ecto-NOX disulfide-thiol exchanger 1 (ENOX1) (Homo sapiens (Human)).